The sequence spans 159 residues: Transcription elongation factor GreA (159 aa).

Residues Thr3 to Lys37 adopt a coiled-coil conformation.

The protein belongs to the GreA/GreB family.

Necessary for efficient RNA polymerase transcription elongation past template-encoded arresting sites. The arresting sites in DNA have the property of trapping a certain fraction of elongating RNA polymerases that pass through, resulting in locked ternary complexes. Cleavage of the nascent transcript by cleavage factors such as GreA or GreB allows the resumption of elongation from the new 3'terminus. GreA releases sequences of 2 to 3 nucleotides. This is Transcription elongation factor GreA from Acetivibrio thermocellus (strain ATCC 27405 / DSM 1237 / JCM 9322 / NBRC 103400 / NCIMB 10682 / NRRL B-4536 / VPI 7372) (Clostridium thermocellum).